We begin with the raw amino-acid sequence, 365 residues long: U-box domain-containing protein 56 (365 aa).

The stretch at 176–281 (YEEQRRRLEI…ELLRALEKGE (106 aa)) forms a coiled coil. One can recognise a U-box domain in the interval 293–365 (EPPQCFICPI…AIKDWLQQHP (73 aa)).

It catalyses the reaction S-ubiquitinyl-[E2 ubiquitin-conjugating enzyme]-L-cysteine + [acceptor protein]-L-lysine = [E2 ubiquitin-conjugating enzyme]-L-cysteine + N(6)-ubiquitinyl-[acceptor protein]-L-lysine.. It functions in the pathway protein modification; protein ubiquitination. In terms of biological role, functions as an E3 ubiquitin ligase. In Arabidopsis thaliana (Mouse-ear cress), this protein is U-box domain-containing protein 56 (PUB56).